The following is a 329-amino-acid chain: Malate dehydrogenase (329 aa).

12–18 (GAAGQIG) is a binding site for NAD(+). Arg-93 and Arg-99 together coordinate substrate. Residues Asn-106, Gln-113, and 130–132 (VGN) contribute to the NAD(+) site. Residues Asn-132 and Arg-163 each coordinate substrate. The active-site Proton acceptor is the His-188.

It belongs to the LDH/MDH superfamily. MDH type 2 family.

The catalysed reaction is (S)-malate + NAD(+) = oxaloacetate + NADH + H(+). Its function is as follows. Catalyzes the reversible oxidation of malate to oxaloacetate. This Streptomyces griseus subsp. griseus (strain JCM 4626 / CBS 651.72 / NBRC 13350 / KCC S-0626 / ISP 5235) protein is Malate dehydrogenase.